The primary structure comprises 301 residues: Protease HtpX (301 aa).

2 consecutive transmembrane segments (helical) span residues 4–24 (IGLFLLTNLAILVVLGVVLFI) and 44–64 (TGLLIIAAVIGFGGSFISLAM). H150 contributes to the Zn(2+) binding site. E151 is a catalytic residue. Position 154 (H154) interacts with Zn(2+). 2 helical membrane-spanning segments follow: residues 165–185 (LIQGVVNTFVVFFSRIIGHFV) and 201–221 (FITSIFAQIVLGILASVIVMW). Zn(2+) is bound at residue E227.

It belongs to the peptidase M48B family. Zn(2+) serves as cofactor.

Its subcellular location is the cell inner membrane. The protein is Protease HtpX of Alkalilimnicola ehrlichii (strain ATCC BAA-1101 / DSM 17681 / MLHE-1).